A 73-amino-acid chain; its full sequence is Beta-defensin 50 (73 aa).

Positions 1–23 (MKTLCFLLLTSGLLYLMVKGVGS) are cleaved as a signal peptide. Disulfide bonds link cysteine 34–cysteine 63 and cysteine 46–cysteine 64.

The protein belongs to the beta-defensin family. In terms of tissue distribution, highly expressed in prostate. Not expressed in uterus, epididymis, ovary, testis, spleen, submaxillary gland, thymus, thyroid, pancreas, smooth muscle, skeletal muscle, heart, kidney, lung, liver, eye and brain.

It is found in the secreted. In terms of biological role, has bactericidal activity. The polypeptide is Beta-defensin 50 (Defb50) (Mus musculus (Mouse)).